The chain runs to 181 residues: MGLTFTKLFSRLFAKKEMRILMVGLDAAGKTTILYKLKLGEIVTTIPTIGFNVETVEYKNISFTVWDVGGQDKIRPLWRHYFQNTQGLIFVVDSNDRERVVEARDELHRMLNEDELRDAVLLVFANKQDLPNAMNAAEITDKLGLHSLRQRHWYIQSTCATSGEGLYEGLDWLSNNIASKA.

Gly-2 carries N-myristoyl glycine lipidation. Residues 24–31 (GLDAAGKT), 67–71 (DVGGQ), and 126–129 (NKQD) contribute to the GTP site.

The protein belongs to the small GTPase superfamily. Arf family. As to expression, seedling shoots.

The protein resides in the golgi apparatus. The enzyme catalyses GTP + H2O = GDP + phosphate + H(+). Its function is as follows. GTP-binding protein involved in protein trafficking; may modulate vesicle budding and uncoating within the Golgi apparatus. This chain is ADP-ribosylation factor 1, found in Oryza sativa subsp. japonica (Rice).